The primary structure comprises 288 residues: THO complex subunit 4D (288 aa).

The segment at 1–55 is disordered; sequence MSGALNMTLDEIVKRGKTARSGGRGISRGRGRGRGGGGRGAGPARRGPLAVNARP. Ser2 bears the N-acetylserine mark. The RRM domain occupies 93–170; sequence TRLHVTNLDQ…RPMRLEILGG (78 aa). The interval 201–288 is disordered; the sequence is QGGGGRGRVR…SYHADAMNTS (88 aa). Residues 232–260 show a composition bias toward gly residues; sequence QGGGMRGGRGGFRARGRGNGGRGRGGGRG. Residues 264-281 show a composition bias toward basic and acidic residues; that stretch reads KPVEKSAADLDKDLESYH.

It belongs to the ALYREF family. In terms of assembly, interacts with PARP1. Interacts with EIF4A3.

Its subcellular location is the nucleus. The protein localises to the nucleoplasm. It localises to the nucleolus. In terms of biological role, export adapter involved in nuclear export of spliced and unspliced mRNA. Plays a role in disease resistance. Mediates multiple defense responses triggered by NEP1, including stomatal closure, hypersensitive cell death (HCD) and defense-related gene expression. The protein is THO complex subunit 4D of Arabidopsis thaliana (Mouse-ear cress).